Consider the following 434-residue polypeptide: Enolase 2 (434 aa).

A (2R)-2-phosphoglycerate-binding site is contributed by Q171. Residue E213 is the Proton donor of the active site. D250, E293, and D320 together coordinate Mg(2+). K345, R374, S375, and K396 together coordinate (2R)-2-phosphoglycerate. Catalysis depends on K345, which acts as the Proton acceptor.

The protein belongs to the enolase family. Mg(2+) serves as cofactor.

Its subcellular location is the cytoplasm. The protein localises to the secreted. The protein resides in the cell surface. The catalysed reaction is (2R)-2-phosphoglycerate = phosphoenolpyruvate + H2O. It participates in carbohydrate degradation; glycolysis; pyruvate from D-glyceraldehyde 3-phosphate: step 4/5. In terms of biological role, catalyzes the reversible conversion of 2-phosphoglycerate (2-PG) into phosphoenolpyruvate (PEP). It is essential for the degradation of carbohydrates via glycolysis. The chain is Enolase 2 from Streptomyces coelicolor (strain ATCC BAA-471 / A3(2) / M145).